We begin with the raw amino-acid sequence, 176 residues long: Translation initiation factor IF-3 (176 aa).

This sequence belongs to the IF-3 family. Monomer.

The protein localises to the cytoplasm. IF-3 binds to the 30S ribosomal subunit and shifts the equilibrium between 70S ribosomes and their 50S and 30S subunits in favor of the free subunits, thus enhancing the availability of 30S subunits on which protein synthesis initiation begins. This is Translation initiation factor IF-3 from Streptococcus equi subsp. zooepidemicus (strain H70).